A 366-amino-acid chain; its full sequence is Tripartite motif-containing protein 54 (366 aa).

The RING-type zinc finger occupies 26 to 82 (CPICLEMFSKPVVILPCQHNLCRKCANDVFQASNPLWQSRSSTTVSSGGRFRCPSCR). Residues 121-163 (EQHLMCEEHEDEKINIYCLSCEVPTCSLCKVFGAHKDCEVAPL) form a B box-type zinc finger. Cys126, His129, Cys149, and His155 together coordinate Zn(2+). The tract at residues 168 to 211 (KRQKSELSDGIAMLVAGNDRVQAVITQMEEVCQTIEENSRRQKQ) is mediates microtubule-binding and homooligomerization. A coiled-coil region spans residues 185–258 (NDRVQAVITQ…LIRQYGDHLE (74 aa)). The region spanning 271–329 (MEEPQMALYLQQAKELINKVGTMSKVELAGRPEPGYERMDQFTVSVEHVAEMLRTIDFQ) is the COS domain. Residues 326–366 (IDFQPGTSGEEEDEEVAVEGEEGNAGPEEERTDGRESTGQH) are disordered. The span at 334-347 (GEEEDEEVAVEGEE) shows a compositional bias: acidic residues. Basic and acidic residues predominate over residues 353-366 (EEERTDGRESTGQH).

Homooligomer and heterooligomer. Interacts with TRIM63 and probably with TRIM55. Interacts with tubulin.

The protein localises to the cytoplasm. It localises to the cytoskeleton. The protein resides in the myofibril. It is found in the sarcomere. Its subcellular location is the z line. In terms of biological role, may bind and stabilize microtubules during myotubes formation. In Bos taurus (Bovine), this protein is Tripartite motif-containing protein 54 (TRIM54).